Reading from the N-terminus, the 932-residue chain is Protein translocase subunit SecA (932 aa).

ATP is bound by residues Q87, 105–109 (GEGKT), and D515. Zn(2+) is bound by residues C916, C918, C927, and H928.

Belongs to the SecA family. In terms of assembly, monomer and homodimer. Part of the essential Sec protein translocation apparatus which comprises SecA, SecYEG and auxiliary proteins SecDF-YajC and YidC. Requires Zn(2+) as cofactor.

Its subcellular location is the cell inner membrane. It localises to the cytoplasm. It carries out the reaction ATP + H2O + cellular proteinSide 1 = ADP + phosphate + cellular proteinSide 2.. In terms of biological role, part of the Sec protein translocase complex. Interacts with the SecYEG preprotein conducting channel. Has a central role in coupling the hydrolysis of ATP to the transfer of proteins into and across the cell membrane, serving both as a receptor for the preprotein-SecB complex and as an ATP-driven molecular motor driving the stepwise translocation of polypeptide chains across the membrane. This chain is Protein translocase subunit SecA, found in Burkholderia orbicola (strain AU 1054).